The chain runs to 316 residues: MEEKQREKVVVIIGPTAVGKTKLSIELAKALNGEIVSGDSMQIYRTMDIGTAKVTADEMEGIPHYMIDIKDPEDSFSVAEFQELVRGHIREITKRGKLPIIVGGTGLYIQSVLYDYQFTDEAGDTAYRERMEKLAEEQGVEFVHKKLEEVDPESAKRIHANNVRRVIRALEIFQTTGKKMSEQLEKQKNELLYDVVLIGLTMDRTMLYDRINLRVDLMMEQGLEQEVKRLYQNGVRDCQSIQAIGYKELYRYFAGATSLEEAISQLKTNSRRYAKRQLTWFRNKMDVAWFDVTDGEKTAEILRYIEGKLQLKSNNN.

Gly14–Thr21 provides a ligand contact to ATP. Residue Thr16–Thr21 participates in substrate binding. The interval Asp39 to Gln42 is interaction with substrate tRNA.

Belongs to the IPP transferase family. In terms of assembly, monomer. Requires Mg(2+) as cofactor.

It catalyses the reaction adenosine(37) in tRNA + dimethylallyl diphosphate = N(6)-dimethylallyladenosine(37) in tRNA + diphosphate. Its function is as follows. Catalyzes the transfer of a dimethylallyl group onto the adenine at position 37 in tRNAs that read codons beginning with uridine, leading to the formation of N6-(dimethylallyl)adenosine (i(6)A). This Bacillus cytotoxicus (strain DSM 22905 / CIP 110041 / 391-98 / NVH 391-98) protein is tRNA dimethylallyltransferase.